The primary structure comprises 273 residues: Putative pyruvate, phosphate dikinase regulatory protein (273 aa).

153–160 (GVSRTSKT) is an ADP binding site.

The protein belongs to the pyruvate, phosphate/water dikinase regulatory protein family. PDRP subfamily.

The enzyme catalyses N(tele)-phospho-L-histidyl/L-threonyl-[pyruvate, phosphate dikinase] + ADP = N(tele)-phospho-L-histidyl/O-phospho-L-threonyl-[pyruvate, phosphate dikinase] + AMP + H(+). It carries out the reaction N(tele)-phospho-L-histidyl/O-phospho-L-threonyl-[pyruvate, phosphate dikinase] + phosphate + H(+) = N(tele)-phospho-L-histidyl/L-threonyl-[pyruvate, phosphate dikinase] + diphosphate. Functionally, bifunctional serine/threonine kinase and phosphorylase involved in the regulation of the pyruvate, phosphate dikinase (PPDK) by catalyzing its phosphorylation/dephosphorylation. The sequence is that of Putative pyruvate, phosphate dikinase regulatory protein from Rhizobium meliloti (strain 1021) (Ensifer meliloti).